Consider the following 337-residue polypeptide: Ornithine carbamoyltransferase, catabolic (337 aa).

Carbamoyl phosphate-binding positions include 57 to 60 (STRT), Gln84, Arg108, and 135 to 138 (HPTQ). L-ornithine is bound by residues Asn167, Asp231, and 235–236 (SM). Residues 272 to 273 (CL) and Arg317 contribute to the carbamoyl phosphate site.

Belongs to the aspartate/ornithine carbamoyltransferase superfamily. OTCase family.

Its subcellular location is the cytoplasm. It catalyses the reaction carbamoyl phosphate + L-ornithine = L-citrulline + phosphate + H(+). The protein operates within amino-acid degradation; L-arginine degradation via ADI pathway; carbamoyl phosphate from L-arginine: step 2/2. Functionally, reversibly catalyzes the transfer of the carbamoyl group from carbamoyl phosphate (CP) to the N(epsilon) atom of ornithine (ORN) to produce L-citrulline. This chain is Ornithine carbamoyltransferase, catabolic (arcB), found in Streptococcus pyogenes serotype M1.